The chain runs to 196 residues: Anthranilate synthase component 2 (196 aa).

The Glutamine amidotransferase type-1 domain maps to 1 to 195; sequence MLLLIDNYDS…LNTTRRLETA (195 aa). 52–54 contacts L-glutamine; that stretch reads GPC. Catalysis depends on Cys80, which acts as the Nucleophile; for GATase activity. L-glutamine-binding positions include Gln84 and 130–131; that span reads SL. Catalysis depends on for GATase activity residues His169 and Glu171.

Heterotetramer consisting of two non-identical subunits: a beta subunit (TrpG) and a large alpha subunit (TrpE).

It carries out the reaction chorismate + L-glutamine = anthranilate + pyruvate + L-glutamate + H(+). It participates in amino-acid biosynthesis; L-tryptophan biosynthesis; L-tryptophan from chorismate: step 1/5. Part of a heterotetrameric complex that catalyzes the two-step biosynthesis of anthranilate, an intermediate in the biosynthesis of L-tryptophan. In the first step, the glutamine-binding beta subunit (TrpG) of anthranilate synthase (AS) provides the glutamine amidotransferase activity which generates ammonia as a substrate that, along with chorismate, is used in the second step, catalyzed by the large alpha subunit of AS (TrpE) to produce anthranilate. In the absence of TrpG, TrpE can synthesize anthranilate directly from chorismate and high concentrations of ammonia. Participates in the tryptophan-dependent indole-3-acetic acid production, which is a phytohormone released by A.brasilense. The polypeptide is Anthranilate synthase component 2 (trpG) (Azospirillum brasilense).